The primary structure comprises 515 residues: Phenylalanine--tRNA ligase beta subunit (515 aa).

The B5 domain occupies 263–334; it reads HEYVKIYVDE…IVMGYNQMPR (72 aa). Residues Asn-312, Asp-318, Glu-321, and Asp-322 each contribute to the Mg(2+) site.

This sequence belongs to the phenylalanyl-tRNA synthetase beta subunit family. Type 2 subfamily. In terms of assembly, tetramer of two alpha and two beta subunits. The cofactor is Mg(2+).

The protein resides in the cytoplasm. It catalyses the reaction tRNA(Phe) + L-phenylalanine + ATP = L-phenylalanyl-tRNA(Phe) + AMP + diphosphate + H(+). The sequence is that of Phenylalanine--tRNA ligase beta subunit from Pyrobaculum aerophilum (strain ATCC 51768 / DSM 7523 / JCM 9630 / CIP 104966 / NBRC 100827 / IM2).